Reading from the N-terminus, the 361-residue chain is PTI1-like tyrosine-protein kinase At3g15890 (361 aa).

In terms of domain architecture, Protein kinase spans 39–328 (FNYDNKLGEG…ISELEANPLF (290 aa)). Residues 45 to 53 (LGEGRFGSV) and Lys-67 contribute to the ATP site. Asp-165 (proton acceptor) is an active-site residue. Disordered stretches follow at residues 195-219 (TGDG…SGKE) and 323-361 (EANP…QQQE). Residues 351-361 (LEDKDHQQQQE) are compositionally biased toward basic and acidic residues.

The protein belongs to the protein kinase superfamily. Tyr protein kinase family.

The enzyme catalyses L-tyrosyl-[protein] + ATP = O-phospho-L-tyrosyl-[protein] + ADP + H(+). The protein is PTI1-like tyrosine-protein kinase At3g15890 of Arabidopsis thaliana (Mouse-ear cress).